The following is a 75-amino-acid chain: Protein B (75 aa).

The polypeptide is Protein B (Dicentrarchus labrax (European seabass)).